The following is a 558-amino-acid chain: NXPE family member 2 (558 aa).

Residues 17-37 form a helical membrane-spanning segment; the sequence is ASARKLFLIVLIIFVFWVVFM.

This sequence belongs to the NXPE family.

Its subcellular location is the membrane. The protein is NXPE family member 2 (Nxpe2) of Mus musculus (Mouse).